A 373-amino-acid polypeptide reads, in one-letter code: Cell surface Cu-only superoxide dismutase ARB_03674 (373 aa).

A signal peptide spans 1 to 55 (MIWKQPPRRMGEMGGSLSRRFGNAAASWAVWRVSRSCFSLLFFFYFFLFFSSSSL). N-linked (GlcNAc...) asparagine glycosylation is found at Asn-75 and Asn-141. Residues His-194, His-196, and His-212 each contribute to the Cu cation site. Cys-206 and Cys-289 are joined by a disulfide. Residues Asn-254 and Asn-274 are each glycosylated (N-linked (GlcNAc...) asparagine). His-280 contacts Cu cation. Residues Asn-283 and Asn-291 are each glycosylated (N-linked (GlcNAc...) asparagine). The segment at 329–348 (GHAPTISATYTPTPTPSPPA) is disordered. Over residues 331-340 (APTISATYTP) the composition is skewed to low complexity. Gly-352 carries GPI-anchor amidated glycine lipidation. The propeptide at 353–373 (AGRLVGFSLGAIMAALVPLAL) is removed in mature form.

This sequence belongs to the Cu-Zn superoxide dismutase family. In terms of assembly, monomer. Requires Cu cation as cofactor. Post-translationally, the GPI-anchor is attached to the protein in the endoplasmic reticulum and serves to target the protein to the cell surface. There, the glucosamine-inositol phospholipid moiety is cleaved off and the GPI-modified mannoprotein is covalently attached via its lipidless GPI glycan remnant to the 1,6-beta-glucan of the outer cell wall layer.

Its subcellular location is the secreted. The protein localises to the cell wall. It is found in the cell membrane. The enzyme catalyses 2 superoxide + 2 H(+) = H2O2 + O2. In terms of biological role, superoxide dismutases serve to convert damaging superoxide radicals, a key form of ROS, to less damaging hydrogen peroxide that can be converted into water by catalase action. Degrades host-derived reactive oxygen species to escape innate immune surveillance. Involved in the occurrence of miconazole-tolerant persisters in biofilms. Persisters are cells that survive high doses of an antimicrobial agent. The unusual attributes of SOD5-like fungal proteins, including the absence of zinc and an open active site that readily captures extracellular copper, make these SODs well suited to meet challenges in zinc and copper availability at the host-pathogen interface. This chain is Cell surface Cu-only superoxide dismutase ARB_03674, found in Arthroderma benhamiae (strain ATCC MYA-4681 / CBS 112371) (Trichophyton mentagrophytes).